Consider the following 2040-residue polypeptide: Apolipoprotein(a) (2040 aa).

Residues 1-19 (MEHKEVVLLLLLFLKSAAP) form the signal peptide. 10 Kringle domains span residues 27–105 (DCYH…LTQC), 141–219 (ECYH…LTQC), 255–333 (ECYH…LTQC), 369–447 (ECYH…LTQC), 483–561 (ECYH…LTQC), 597–675 (ECYH…LTQC), 711–789 (ECYH…LTQC), 825–903 (ECYH…LTQC), 939–1017 (ECYH…LTRC), and 1053–1131 (DCYY…LTQC). 30 disulfides stabilise this stretch: C28/C105, C49/C88, C77/C100, C142/C219, C163/C202, C191/C214, C256/C333, C277/C316, C305/C328, C370/C447, C391/C430, C419/C442, C484/C561, C505/C544, C533/C556, C598/C675, C619/C658, C647/C670, C712/C789, C733/C772, C761/C784, C826/C903, C847/C886, C875/C898, C940/C1017, C961/C1000, C989/C1012, C1054/C1131, C1075/C1114, and C1103/C1126. N61 carries N-linked (GlcNAc...) asparagine glycosylation. An N-linked (GlcNAc...) asparagine glycan is attached at N101. N-linked (GlcNAc...) asparagine glycosylation is present at N215. Residue N329 is glycosylated (N-linked (GlcNAc...) asparagine). Residue N443 is glycosylated (N-linked (GlcNAc...) asparagine). A glycan (N-linked (GlcNAc...) asparagine) is linked at N557. Residue N671 is glycosylated (N-linked (GlcNAc...) asparagine). N-linked (GlcNAc...) asparagine glycosylation occurs at N785. N899 carries an N-linked (GlcNAc...) asparagine glycan. N1013 is a glycosylation site (N-linked (GlcNAc...) asparagine). The N-linked (GlcNAc...) asparagine glycan is linked to N1127. The disordered stretch occupies residues 1147–1166 (DPSTEASSEEAPTEQSPGVQ). Kringle domains follow at residues 1167-1245 (DCYH…LTQC) and 1273-1351 (DCYH…LTQC). Intrachain disulfides connect C1168–C1245, C1189–C1228, C1217–C1240, C1274–C1351, C1295–C1334, and C1323–C1346. The N-linked (GlcNAc...) asparagine glycan is linked to N1241. Residues N1347 and N1381 are each glycosylated (N-linked (GlcNAc...) asparagine). Positions 1365–1388 (VPVPSTELPSEEAPTENSTGVQDC) are disordered. One can recognise a Kringle 13 domain in the interval 1387–1465 (DCYRGDGQSY…RWEYCNLTRC (79 aa)). Disulfide bonds link C1388–C1465, C1409–C1448, and C1437–C1460. A glycan (N-linked (GlcNAc...) asparagine) is linked at N1461. A disordered region spans residues 1476–1497 (PTVAPVPSTEAPSEQAPPEKSP). Kringle domains are found at residues 1501–1579 (DCYH…LTQC), 1615–1693 (QCYH…LTRC), and 1719–1799 (DCMF…IPLC). Intrachain disulfides connect C1502-C1579, C1523-C1562, C1551-C1574, C1616-C1693, C1637-C1676, C1665-C1688, C1720-C1799, C1741-C1782, C1770-C1794, and C1846-C1862. N-linked (GlcNAc...) asparagine glycosylation is present at N1575. N-linked (GlcNAc...) asparagine glycosylation is present at N1689. A Peptidase S1 domain is found at 1820–2038 (IVGGCVAHPH…FVTWIEGMMR (219 aa)). Residues H1861 and D1904 each act as charge relay system in the active site. Cystine bridges form between C1938–C1996, C1968–C1975, and C1986–C2014. The Charge relay system role is filled by S1990.

It belongs to the peptidase S1 family. Plasminogen subfamily. Disulfide-linked to apo-B100. Binds to fibronectin and decorin. N- and O-glycosylated. The N-glycans are complex biantennary structures present in either a mono- or disialylated state. The O-glycans are mostly (80%) represented by the monosialylated core type I structure, NeuNAcalpha2-3Galbeta1-3GalNAc, with smaller amounts of disialylated and non-sialylated O-glycans also detected.

Apo(a) is the main constituent of lipoprotein(a) (Lp(a)). It has serine proteinase activity and is able of autoproteolysis. Inhibits tissue-type plasminogen activator 1. Lp(a) may be a ligand for megalin/Gp 330. This is Apolipoprotein(a) (LPA) from Homo sapiens (Human).